Consider the following 573-residue polypeptide: Chaperone Ric-8 (573 aa).

Positions 308-324 are enriched in basic and acidic residues; sequence ESHKEREQDNEKEKDTE. 2 disordered regions span residues 308–329 and 473–493; these read ESHK…GAGA and GTDY…QQQQ. Phosphoserine is present on residues S477, S478, S480, and S483.

It belongs to the synembryn family. In terms of assembly, interacts with GDP-bound G(i)-alpha protein G-i-alpha-65A. Does not interact with G-alpha proteins when they are in complex with subunits beta and gamma. Interacts with Frq2 in a Ca(2+)-independent manner but does not interact with Frq1. As to expression, expression in the embryo is primarily neural.

The protein localises to the cytoplasm. Its subcellular location is the cell cortex. It is found in the presynapse. In terms of biological role, chaperone that specifically binds and folds some, but not all, nascent G alpha proteins prior to G protein heterotrimer formation, promoting their stability and activity. Also acts as a guanine nucleotide exchange factor (GEF) for G alpha proteins by stimulating exchange of bound GDP for free GTP. Plays a key role in asymmetric spindle positioning, a step for asymmetric cell division that generates cell diversity during development by activating G(i) alpha protein independently of G-protein coupled receptors. Required during gastrulation and sensory organ precursor (SOP) formation. Plays a role in positively regulating synapse number and neurotransmitter release. The polypeptide is Chaperone Ric-8 (ric8a) (Drosophila melanogaster (Fruit fly)).